A 407-amino-acid chain; its full sequence is Na(+)-translocating NADH-quinone reductase subunit F (407 aa).

The chain crosses the membrane as a helical span at residues 4–24 (IILGVFFFTAIVVALVFVILG). Residues 33-125 (GNVEVLINGE…NMKIHVHEEV (93 aa)) form the 2Fe-2S ferredoxin-type domain. The [2Fe-2S] cluster site is built by cysteine 68, cysteine 74, cysteine 77, and cysteine 109. Residues 128 to 269 (VKKWECTVRS…SGPFGEFFAR (142 aa)) form the FAD-binding FR-type domain.

The protein belongs to the NqrF family. As to quaternary structure, composed of six subunits; NqrA, NqrB, NqrC, NqrD, NqrE and NqrF. Requires [2Fe-2S] cluster as cofactor. FAD is required as a cofactor.

It is found in the cell inner membrane. The enzyme catalyses a ubiquinone + n Na(+)(in) + NADH + H(+) = a ubiquinol + n Na(+)(out) + NAD(+). NQR complex catalyzes the reduction of ubiquinone-1 to ubiquinol by two successive reactions, coupled with the transport of Na(+) ions from the cytoplasm to the periplasm. The first step is catalyzed by NqrF, which accepts electrons from NADH and reduces ubiquinone-1 to ubisemiquinone by a one-electron transfer pathway. The chain is Na(+)-translocating NADH-quinone reductase subunit F from Methylococcus capsulatus (strain ATCC 33009 / NCIMB 11132 / Bath).